The chain runs to 330 residues: Type II methyltransferase M.HaeIII (330 aa).

In terms of domain architecture, SAM-dependent MTase C5-type spans 1–327; sequence MNLISLFSGA…KTIKSALEIC (327 aa). ATP-binding positions include Glu29 and 50–51; that span reads DI. Residue Cys71 is part of the active site. Asn260 serves as a coordination point for ATP.

Belongs to the class I-like SAM-binding methyltransferase superfamily. C5-methyltransferase family. In terms of assembly, monomer.

The enzyme catalyses a 2'-deoxycytidine in DNA + S-adenosyl-L-methionine = a 5-methyl-2'-deoxycytidine in DNA + S-adenosyl-L-homocysteine + H(+). Functionally, a methylase, recognizes the double-stranded sequence 5'-GGCC-3', methylates C-3 on both strands, and protects the DNA from cleavage by the HaeIII endonuclease. This is Type II methyltransferase M.HaeIII (haeIIIM) from Haemophilus aegyptius.